Consider the following 535-residue polypeptide: MTKYIFVTGGVVSSLGKGIVAASLGRLLKNRGLNVTIQKFDPYINVDPGTMSPYQHGEVFVTDDGAETDLDLGHYERFIDINLNKFSNVTTGKIYSTVLKKERRGDYLGGTVQVIPHITNELKDRVYRAGKETNADVVITEIGGTVGDIESLPFLEAIRQMKSDIGRENVMYIHCTLVPYIKAAGELKTKPTQHSVKELRSLGIQPNIIVVRTEMPISQDMKDKIALFCDIDTKAVIECEDADNLYSIPLELQKQGLDKLVCEHMKLACKEAEMSEWKELVNKVSNLSQTITIGLVGKYVELPDAYISVVESLRHAGYAFDTDVKVKWINAEEVTENNIAELTSGTDGIIVPGGFGDRGVEGKIVATKYARENNIPFLGICLGMQVASIEYARNVLGLKGAHSAEIDPSTQYPIIDLLPEQKDVEDLGGTLRLGLYPCKLEEGTKAFEVYQDEVVYERHRHRYEFNNEFRQQMEEQGFVFSGTSPDGRLVEIIELKDHPWFVASQFHPEFKSRPTRPQPLFKGFIGASVEAANQK.

An amidoligase domain region spans residues 1-267; that stretch reads MTKYIFVTGG…DKLVCEHMKL (267 aa). Ser13 contributes to the CTP binding site. Ser13 contacts UTP. Residue 14–19 participates in ATP binding; that stretch reads SLGKGI. Tyr54 provides a ligand contact to L-glutamine. Asp71 is an ATP binding site. Mg(2+) is bound by residues Asp71 and Glu141. CTP contacts are provided by residues 148-150, 188-193, and Lys224; these read DIE and KTKPTQ. Residues 188–193 and Lys224 each bind UTP; that span reads KTKPTQ. The 243-residue stretch at 292–534 folds into the Glutamine amidotransferase type-1 domain; sequence TIGLVGKYVE…IGASVEAANQ (243 aa). Gly354 contacts L-glutamine. Cys381 (nucleophile; for glutamine hydrolysis) is an active-site residue. Residues 382 to 385, Glu405, and Arg462 contribute to the L-glutamine site; that span reads LGMQ. Residues His507 and Glu509 contribute to the active site.

The protein belongs to the CTP synthase family. As to quaternary structure, homotetramer. Interacts with BrxC.

The catalysed reaction is UTP + L-glutamine + ATP + H2O = CTP + L-glutamate + ADP + phosphate + 2 H(+). The enzyme catalyses L-glutamine + H2O = L-glutamate + NH4(+). It catalyses the reaction UTP + NH4(+) + ATP = CTP + ADP + phosphate + 2 H(+). It functions in the pathway pyrimidine metabolism; CTP biosynthesis via de novo pathway; CTP from UDP: step 2/2. Allosterically activated by GTP, when glutamine is the substrate; GTP has no effect on the reaction when ammonia is the substrate. The allosteric effector GTP functions by stabilizing the protein conformation that binds the tetrahedral intermediate(s) formed during glutamine hydrolysis. Inhibited by the product CTP, via allosteric rather than competitive inhibition. Functionally, catalyzes the ATP-dependent amination of UTP to CTP with either L-glutamine or ammonia as the source of nitrogen. Regulates intracellular CTP levels through interactions with the four ribonucleotide triphosphates. The chain is CTP synthase from Bacillus subtilis (strain 168).